Here is a 485-residue protein sequence, read N- to C-terminus: D-alanine--D-alanyl carrier protein ligase (485 aa).

144-145 contributes to the ATP binding site; it reads TS. D189 provides a ligand contact to D-alanine. 284 to 289 lines the ATP pocket; the sequence is NTYGPT. V293 contacts D-alanine. ATP contacts are provided by D365 and K473. K473 is a D-alanine binding site.

The protein belongs to the ATP-dependent AMP-binding enzyme family. DltA subfamily.

It is found in the cytoplasm. It catalyses the reaction holo-[D-alanyl-carrier protein] + D-alanine + ATP = D-alanyl-[D-alanyl-carrier protein] + AMP + diphosphate. Its pathway is cell wall biogenesis; lipoteichoic acid biosynthesis. Its function is as follows. Catalyzes the first step in the D-alanylation of lipoteichoic acid (LTA), the activation of D-alanine and its transfer onto the D-alanyl carrier protein (Dcp) DltC. In an ATP-dependent two-step reaction, forms a high energy D-alanyl-AMP intermediate, followed by transfer of the D-alanyl residue as a thiol ester to the phosphopantheinyl prosthetic group of the Dcp. D-alanylation of LTA plays an important role in modulating the properties of the cell wall in Gram-positive bacteria, influencing the net charge of the cell wall. The chain is D-alanine--D-alanyl carrier protein ligase from Staphylococcus aureus (strain bovine RF122 / ET3-1).